Reading from the N-terminus, the 803-residue chain is Ras GTPase-activating protein 4B (803 aa).

C2 domains follow at residues M1–A105 and V116–F232. Residues D21, D27, D74, D76, S79, D82, D149, D155, D202, D204, S207, and D210 each coordinate Ca(2+). The 229-residue stretch at G318–L546 folds into the Ras-GAP domain. Positions P566–I673 constitute a PH domain. A Btk-type zinc finger spans residues N675 to R711. Residues H683, C694, C695, and C705 each coordinate Zn(2+). Residues E781–T803 are disordered.

Requires Ca(2+) as cofactor.

The protein resides in the cytoplasm. It localises to the cytosol. The protein localises to the cell membrane. Ca(2+)-dependent Ras GTPase-activating protein, that may play a role in the Ras-MAPK pathway. The polypeptide is Ras GTPase-activating protein 4B (RASA4B) (Homo sapiens (Human)).